The sequence spans 937 residues: MTSAEIRQSFLDFFARQGHTIVPSSSLLPDSPGLLFTNAGMNQFVPIFLGDRAPDVSKWAGARPAKDTRAADTQKCIRAGGKHNDLEDVGFDTYHHTMFEMLGNWSFGDYFKKESITWGWELITKVWGIPAKRLFATVYSPDKSKNDPSDFDQEAYDIWAGVFKKEGLDPAVHIVHGNKKDNFWMMGDTGPCGPCSEIHFNLLPSDDEVEGRKLVNAGVPRCIEIWNHVFIQFNANADGTFSPLAAKHVDTGMGFERVAGIYATTKGFKDFSRDPSNYNADVFAPLFAKIEELSKKTYNGTVPTRREGLGEQENIDIAFRVLADHARCVSCAIADNILPGNEGRNYVIRRILRRGILYGKKLNLATGFFEQLVAPVVESLGAVFPELKERQDIIRRVIRSEEESFGRTLEKGLQLFNEGAKLLLDAHPIKGQADVPGVGTITNIGGVTRFLGGKFVFRLYDTYGFPVDMTQLLATERGLAVNMVEFASEMQQQQDRSRAAQKKEVIVAATEGDNTEAAQPTKFIGYDRLTADAQVLDVVKTDKDLFLVFDQTPFYAEMGGQTGDHGVVKIDGQTFAILATVKDKAGRFLHKLAPACAADVARLNPVGKKAALGVSPLARRAISRHHSAEHLVHWALRKTLGTHVRQAGTSKTKERMRFDFTHFEALTPEQIAEVERLVNSKILSNDKVEAYETEFDKKPEGTLAFFGEKYGKIVRVVDIGGYSRELCGGTHVSTTSEIGLFKIVAEMAIAAGTRRLEAVAGQAAYDFVEEHETALKAVTHKLNAGPQDVAQKLDSLLAHQKELEKKLKAYEQKAAAGLADELAAKATARDGLKFVTATVSIDNQDALRSLGSQVLHKLGEGVVTLGAALGDRASLVVYCSPAAIKAGHQAGKIVGELSTKIGGKGGGKPDFAMGGGKDPSKLADVLKQSAPGVICSW.

4 residues coordinate Zn(2+): histidine 626, histidine 630, cysteine 727, and histidine 731.

Belongs to the class-II aminoacyl-tRNA synthetase family. Zn(2+) is required as a cofactor.

Its subcellular location is the cytoplasm. The enzyme catalyses tRNA(Ala) + L-alanine + ATP = L-alanyl-tRNA(Ala) + AMP + diphosphate. Its function is as follows. Catalyzes the attachment of alanine to tRNA(Ala) in a two-step reaction: alanine is first activated by ATP to form Ala-AMP and then transferred to the acceptor end of tRNA(Ala). Also edits incorrectly charged Ser-tRNA(Ala) and Gly-tRNA(Ala) via its editing domain. This chain is Alanine--tRNA ligase, found in Opitutus terrae (strain DSM 11246 / JCM 15787 / PB90-1).